Here is a 373-residue protein sequence, read N- to C-terminus: GDSL esterase/lipase LIP-4 (373 aa).

Residues 1–32 form the signal peptide; the sequence is MATLFLYSNTFSFFFITLVSLALLILRQPSRA. Ser47 serves as the catalytic Nucleophile. Asn93 is a glycosylation site (N-linked (GlcNAc...) asparagine). Residues Asp339 and His342 contribute to the active site.

It belongs to the 'GDSL' lipolytic enzyme family.

It localises to the secreted. In Arabidopsis thaliana (Mouse-ear cress), this protein is GDSL esterase/lipase LIP-4 (LIP4).